The chain runs to 148 residues: Arginine repressor (148 aa).

Belongs to the ArgR family.

Its subcellular location is the cytoplasm. Its pathway is amino-acid biosynthesis; L-arginine biosynthesis [regulation]. Regulates arginine biosynthesis genes. This Acidobacterium capsulatum (strain ATCC 51196 / DSM 11244 / BCRC 80197 / JCM 7670 / NBRC 15755 / NCIMB 13165 / 161) protein is Arginine repressor.